A 322-amino-acid chain; its full sequence is MPPPLSPRARTLVGQVKRNVQFHVELHQYNTNPTPHTMADIQFDSALDLLRRLNPRDTKQNLQAITSIVPDLTEDLLSSVDQPLEIRRCPKTNRDYLLCDYNRDGDSYRSPWSNEFDPPLEDGTVPSERVRKLEVAANEAFDVYRELYYEGGVGSVYFWDLDDGFAGVILLKKGVTPGAKSSGEWDSIHVFEATDRARMSHYKLTSTVILHLANENEALGEMDLSGNMTRQMEVDLPVESDASHVANVGRLVEDMELKMRNLLQEVYFGKAKDVVGELRSKPLLCHGRTKAMDADKNTGLAPLSETNKEKAAHLEMIRSMQR.

It belongs to the F-actin-capping protein beta subunit family. In terms of assembly, component of the F-actin capping complex, composed of a heterodimer of an alpha and a beta subunit.

It localises to the cytoplasm. The protein localises to the cytoskeleton. The protein resides in the actin patch. In terms of biological role, F-actin-capping proteins bind in a Ca(2+)-independent manner to the fast growing ends of actin filaments (barbed end) thereby blocking the exchange of subunits at these ends. Unlike other capping proteins (such as gelsolin and severin), these proteins do not sever actin filaments. This chain is F-actin-capping protein subunit beta (cap2), found in Aspergillus fumigatus (strain ATCC MYA-4609 / CBS 101355 / FGSC A1100 / Af293) (Neosartorya fumigata).